The chain runs to 652 residues: Vitrin (652 aa).

Residues 1 to 26 form the signal peptide; sequence MGIVVLTMKASVIEMFLVLLVTGIQS. The 94-residue stretch at 40-133 folds into the LCCL domain; the sequence is TVPQISCDVR…LSLPRWRESF (94 aa). 2 cysteine pairs are disulfide-bonded: cysteine 46-cysteine 62 and cysteine 66-cysteine 86. 2 disordered regions span residues 137–181 and 196–231; these read EGKP…AAQP and THTT…EPAL. The segment covering 145 to 158 has biased composition (low complexity); sequence TYPSSLTYSSSKSP. Residues 196–212 show a composition bias toward polar residues; that stretch reads THTTLPKPSPSAGSTAS. 2 consecutive VWFA domains span residues 267–452 and 469–638; these read DLSF…VKRV and DIGF…VPKV. Asparagine 494 is a glycosylation site (N-linked (GlcNAc...) asparagine).

As to quaternary structure, binds dermatan sulfate and chondroitin sulfate.

It is found in the secreted. It localises to the extracellular space. Its subcellular location is the extracellular matrix. Its function is as follows. Promotes matrix assembly and cell adhesiveness. Plays a role in spinal cord formation by regulating the proliferation and differentiation of neural stem cells. This is Vitrin (VIT) from Bos taurus (Bovine).